The chain runs to 531 residues: Tubulin-folding cofactor E (531 aa).

Residues 32 to 76 enclose the CAP-Gly domain; the sequence is GDVEGYSGTWIGVDWDQDGDGKHNGSVNGVFYFNGRSQSSASFVR. LRR repeat units follow at residues 84–109, 159–183, 185–213, 233–256, 260–284, 285–308, 318–342, 344–366, and 474–497; these read ITLL…MYVL, LPNL…ALCE, LPAL…NIRV, LPGI…SSSD, FNSL…KLSQ, LPCL…VNGT, FPSL…ALNG, PQLV…GVPR, and VGKL…LFLQ.

This sequence belongs to the TBCE family. In terms of assembly, supercomplex made of cofactors A to E. Cofactors A and D function by capturing and stabilizing tubulin in a quasi-native conformation. Cofactor E binds to the cofactor D-tubulin complex; interaction with cofactor C then causes the release of tubulin polypeptides that are committed to the native state.

It is found in the cytoplasm. Its function is as follows. Essential tubulin-folding protein involved in the tubulin folding pathway. Not essential for cell viability. Probably involved in the binding of alpha-tubulin in the multimeric supercomplex. The chain is Tubulin-folding cofactor E (TFCE) from Arabidopsis thaliana (Mouse-ear cress).